Reading from the N-terminus, the 534-residue chain is (E)-beta-farnesene synthase (534 aa).

5 residues coordinate Mg(2+): Asp287, Asp291, Asn431, Ser435, and Glu439. Residues 287–291 carry the DDXXD motif motif; sequence DDMMD.

Belongs to the terpene synthase family. Mg(2+) serves as cofactor. Requires Co(2+) as cofactor. Mn(2+) is required as a cofactor.

Its subcellular location is the cytoplasm. It catalyses the reaction (2E,6E)-farnesyl diphosphate = (E)-beta-farnesene + diphosphate. It participates in secondary metabolite biosynthesis; terpenoid biosynthesis. Its function is as follows. Sesquiterpene cyclase catalyzing the production of beta-farnesene and alpha-bergamotene in equal amounts from farnesyl diphosphate. Involved in indirect defense by producing volatile signals attracting natural enemies of herbivores. This Zea mays subsp. mexicana (Mexican teosinte) protein is (E)-beta-farnesene synthase.